The chain runs to 154 residues: Protein X (154 aa).

Residues 68-117 (PCALRFTFARRMETTVNAHQVLPKVLHKRTLGLSAMSTTDLEAYFKDCVF) are mitochondrial targeting sequence.

The protein belongs to the orthohepadnavirus protein X family. May form homodimer. May interact with host CEBPA, CFLAR, CREB1, DDB1, E4F1, HBXIP, HSPD1/HSP60, NFKBIA, POLR2E and SMAD4. Interacts with host SMC5-SMC6 complex and induces its degradation. Interacts with host TRPC4AP; leading to prevent ubiquitination of TRPC4AP. Interacts with host PLSCR1; this interaction promotes ubiquitination and degradation of HBx and impairs HBx-mediated cell proliferation. A fraction may be phosphorylated in insect cells and HepG2 cells, a human hepatoblastoma cell line. Phosphorylated in vitro by host protein kinase C or mitogen-activated protein kinase. N-acetylated in insect cells.

Its subcellular location is the host cytoplasm. It localises to the host nucleus. The protein resides in the host mitochondrion. In terms of biological role, multifunctional protein that plays a role in silencing host antiviral defenses and promoting viral transcription. Does not seem to be essential for HBV infection. May be directly involved in development of cirrhosis and liver cancer (hepatocellular carcinoma). Most of cytosolic activities involve modulation of cytosolic calcium. The effect on apoptosis is controversial depending on the cell types in which the studies have been conducted. May induce apoptosis by localizing in mitochondria and causing loss of mitochondrial membrane potential. May also modulate apoptosis by binding host CFLAR, a key regulator of the death-inducing signaling complex (DISC). Promotes viral transcription by using the host E3 ubiquitin ligase DDB1 to target the SMC5-SMC6 complex to proteasomal degradation. This host complex would otherwise bind to viral episomal DNA, and prevents its transcription. Moderately stimulates transcription of many different viral and cellular transcription elements. Promoters and enhancers stimulated by HBx contain DNA binding sites for NF-kappa-B, AP-1, AP-2, c-EBP, ATF/CREB, or the calcium-activated factor NF-AT. In Hepatitis B virus genotype C subtype ayw (isolate China/Tibet127/2002) (HBV-C), this protein is Protein X.